The primary structure comprises 423 residues: Histidine--tRNA ligase (423 aa).

Belongs to the class-II aminoacyl-tRNA synthetase family. In terms of assembly, homodimer.

The protein resides in the cytoplasm. The enzyme catalyses tRNA(His) + L-histidine + ATP = L-histidyl-tRNA(His) + AMP + diphosphate + H(+). This chain is Histidine--tRNA ligase (hisS), found in Haemophilus influenzae (strain ATCC 51907 / DSM 11121 / KW20 / Rd).